Here is a 130-residue protein sequence, read N- to C-terminus: Small ribosomal subunit protein uS9 (130 aa).

The protein belongs to the universal ribosomal protein uS9 family.

This Neisseria gonorrhoeae (strain ATCC 700825 / FA 1090) protein is Small ribosomal subunit protein uS9.